Reading from the N-terminus, the 241-residue chain is Thiamine import ATP-binding protein ThiQ (241 aa).

An ABC transporter domain is found at 2-239 (IQLDKLNHCY…PKDEVLIQYL (238 aa)). 41–48 (GPSGAGKS) is a binding site for ATP.

Belongs to the ABC transporter superfamily. Thiamine importer (TC 3.A.1.19.1) family. As to quaternary structure, the complex is composed of two ATP-binding proteins (ThiQ), two transmembrane proteins (ThiP) and a solute-binding protein (ThiB).

The protein localises to the cell inner membrane. The catalysed reaction is thiamine(out) + ATP + H2O = thiamine(in) + ADP + phosphate + H(+). Functionally, part of the ABC transporter complex ThiBPQ involved in thiamine import. Responsible for energy coupling to the transport system. This chain is Thiamine import ATP-binding protein ThiQ, found in Photobacterium profundum (strain SS9).